The following is a 362-amino-acid chain: 3-dehydroquinate synthase (362 aa).

NAD(+) is bound by residues 74–79, 108–112, 132–133, K145, K154, and 172–175; these read DGEGYK, GVIGD, TT, and TLDT. 3 residues coordinate Zn(2+): E187, H250, and H267.

Belongs to the sugar phosphate cyclases superfamily. Dehydroquinate synthase family. Co(2+) is required as a cofactor. The cofactor is Zn(2+). Requires NAD(+) as cofactor.

The protein localises to the cytoplasm. The catalysed reaction is 7-phospho-2-dehydro-3-deoxy-D-arabino-heptonate = 3-dehydroquinate + phosphate. It functions in the pathway metabolic intermediate biosynthesis; chorismate biosynthesis; chorismate from D-erythrose 4-phosphate and phosphoenolpyruvate: step 2/7. Its function is as follows. Catalyzes the conversion of 3-deoxy-D-arabino-heptulosonate 7-phosphate (DAHP) to dehydroquinate (DHQ). This chain is 3-dehydroquinate synthase, found in Geobacter sp. (strain M21).